The primary structure comprises 623 residues: MECKIEGKEKYQHSLNLLNKIQNMKELAEMIDVVLTAEGEKFPCHRLVLAAFSPYFKAMFTCGLLECNQREVILYDITAESVSVLLNYMYNAALEINNANVQTVAMAAYFMQMEEVFSVCQKYMMDHMDASNCLGIYYFAKQIGAEDLSDRSKKYLYQHFAEVSLHEEILEIEVHQFLTLIKSDDLNISREESILDLVLRWVNHNKELRTVHLVELLKQVRLELVNPSFLRQALRRNTMLLCDADCVDIIQNAFKAIKTPQQHSLNLRYGMETTSLLLCIGNNSSGIRSRHRSYGDASFCYDPVSRKTYFISSPKYGEGLGTVCTGVVMENNTIIVAGEASASKLSRQKNKNVEIYRYHDRGNQFWEKLCTAEFRELYALGSIHNDLYVIGGQMKIKNQYLITNCVDKYSVERDNWKRVSPLPLQLACHAVVTVNNKLYVIGGWTPQMDLPDEEPDRLSNKLLQYDPSQDQWSVRAPMKYSKYRFSTAVVNSEIYVLGGIGCVGQDKGQVRKCLDVVEIYNPDGDFWREGPPMPSPLLSLRTNSTNAGAVDGKLYVCGGFHGADRHEVISKEILELDPWENQWNVVAINVLMHDSYDVCLVARMNPRDLIPPPSDLVEEGNEH.

In terms of domain architecture, BTB spans 31–98 (IDVVLTAEGE…MYNAALEINN (68 aa)). One can recognise a BACK domain in the interval 133-235 (CLGIYYFAKQ…NPSFLRQALR (103 aa)). Kelch repeat units lie at residues 386 to 436 (DLYV…TVNN), 437 to 492 (KLYV…VVNS), 494 to 547 (IYVL…STNA), and 553 to 603 (KLYV…LVAR).

The chain is Kelch repeat and BTB domain-containing protein 12 (KBTBD12) from Homo sapiens (Human).